Consider the following 430-residue polypeptide: Histidinol dehydrogenase (430 aa).

Positions 131, 192, and 215 each coordinate NAD(+). Substrate is bound by residues Ser-238, Gln-260, and His-263. Positions 260 and 263 each coordinate Zn(2+). Residues Glu-328 and His-329 each act as proton acceptor in the active site. His-329, Asp-362, Glu-416, and His-421 together coordinate substrate. Residue Asp-362 participates in Zn(2+) binding. His-421 provides a ligand contact to Zn(2+).

Belongs to the histidinol dehydrogenase family. Zn(2+) is required as a cofactor.

It catalyses the reaction L-histidinol + 2 NAD(+) + H2O = L-histidine + 2 NADH + 3 H(+). The protein operates within amino-acid biosynthesis; L-histidine biosynthesis; L-histidine from 5-phospho-alpha-D-ribose 1-diphosphate: step 9/9. Its function is as follows. Catalyzes the sequential NAD-dependent oxidations of L-histidinol to L-histidinaldehyde and then to L-histidine. This chain is Histidinol dehydrogenase, found in Acinetobacter baylyi (strain ATCC 33305 / BD413 / ADP1).